We begin with the raw amino-acid sequence, 226 residues long: Endonuclease NucS (226 aa).

It belongs to the NucS endonuclease family.

It is found in the cytoplasm. Functionally, cleaves both 3' and 5' ssDNA extremities of branched DNA structures. The protein is Endonuclease NucS of Mycobacterium tuberculosis (strain ATCC 25618 / H37Rv).